The primary structure comprises 219 residues: Probable GTP-binding protein EngB (219 aa).

Residues 31–205 (VGVEIAFAGR…LAILNEWCHP (175 aa)) form the EngB-type G domain. Residues 39–46 (GRSNAGKS), 66–70 (GRTQL), 84–87 (DLPG), 151–154 (TKSD), and 184–186 (FSS) each bind GTP. 2 residues coordinate Mg(2+): Ser46 and Thr68.

It belongs to the TRAFAC class TrmE-Era-EngA-EngB-Septin-like GTPase superfamily. EngB GTPase family. The cofactor is Mg(2+).

Functionally, necessary for normal cell division and for the maintenance of normal septation. The chain is Probable GTP-binding protein EngB from Shewanella baltica (strain OS223).